The following is a 396-amino-acid chain: Probable sugar efflux transporter (396 aa).

The next 12 membrane-spanning stretches (helical) occupy residues 15 to 35 (VVTL…PVGL), 50 to 70 (VGIM…PFML), 81 to 101 (LICL…SWSF), 103 to 123 (VLVI…SITA), 136 to 156 (AQAL…GLPL), 170 to 190 (FFAI…LLPL), 209 to 229 (PALM…YTAY), 246 to 266 (FATA…VIFG), 275 to 295 (TLVS…LPAA), 299 to 319 (IHLG…GLGM), 333 to 353 (VAMA…ALVG), and 364 to 384 (MIGY…IIIF).

Belongs to the major facilitator superfamily. SotB (TC 2.A.1.2) family.

It localises to the cell inner membrane. Its function is as follows. Involved in the efflux of sugars. The physiological role may be the reduction of the intracellular concentration of toxic sugars or sugar metabolites. This is Probable sugar efflux transporter from Escherichia coli (strain SMS-3-5 / SECEC).